The chain runs to 423 residues: 26S proteasome regulatory subunit 6A homolog (423 aa).

Position 211-218 (211-218 (GPPGTGKT)) interacts with ATP.

Belongs to the AAA ATPase family.

The protein localises to the cytoplasm. Its subcellular location is the nucleus. Functionally, the 26S proteasome is involved in the ATP-dependent degradation of ubiquitinated proteins. The regulatory (or ATPase) complex confers ATP dependency and substrate specificity to the 26S complex. In Solanum lycopersicum (Tomato), this protein is 26S proteasome regulatory subunit 6A homolog (TBP1).